The following is a 51-amino-acid chain: uncharacterized protein (51 aa).

Residues 1-24 (MGGRFSGRVGIEKGGHPPSAADHS) form a disordered region.

This is an uncharacterized protein from Escherichia coli.